A 798-amino-acid polypeptide reads, in one-letter code: ATP-dependent RNA helicase DBP4 (798 aa).

Residues 1–30 (MAHKGKAAPAKPPTSHKKEVKSLKRKRGQE) are disordered. The segment covering 16-30 (HKKEVKSLKRKRGQE) has biased composition (basic and acidic residues). The Q motif motif lies at 49 to 77 (KAFAELPLSEPTAKGVRDSHFETLTDIQA). One can recognise a Helicase ATP-binding domain in the interval 80-254 (IPLALKGRDI…RLSLKDPEYV (175 aa)). Residue 93–100 (AKTGSGKT) participates in ATP binding. The DEAD box motif lies at 202–205 (DEAD). The Helicase C-terminal domain occupies 280–435 (KLDTLWGFIK…SKKKSIRDEL (156 aa)). Disordered stretches follow at residues 503–544 (QKGE…RTKA) and 653–781 (QDED…LDHE). 2 stretches are compositionally biased toward basic and acidic residues: residues 529–544 (DDKPRRRKKDEVRTKA) and 666–689 (ALRKQFVEQEGDKVKEADIDDKAL). Residues 690 to 704 (AKQKKREKKLKRKAR) are compositionally biased toward basic residues. Positions 767–781 (DERKPKSKVIELDHE) are enriched in basic and acidic residues.

The protein belongs to the DEAD box helicase family. DDX10/DBP4 subfamily. In terms of assembly, interacts with the U3 and U14 snoRNAs. Associates with pre-ribosomal complexes.

Its subcellular location is the nucleus. The protein resides in the nucleolus. The enzyme catalyses ATP + H2O = ADP + phosphate + H(+). In terms of biological role, ATP-dependent RNA helicase required for ribosome biogenesis. Involved in the release of U14 snoRNA in pre-ribosomal complexes. Required for pre-rRNA cleavage at site A2. This is ATP-dependent RNA helicase DBP4 (DBP4) from Pyricularia oryzae (strain 70-15 / ATCC MYA-4617 / FGSC 8958) (Rice blast fungus).